Reading from the N-terminus, the 352-residue chain is Histidine biosynthesis bifunctional protein HisB (352 aa).

The tract at residues 1 to 164 (MSQKILFIDR…EIENEILSSF (164 aa)) is histidinol-phosphatase. Asp9 acts as the Nucleophile in catalysis. Positions 9 and 11 each coordinate Mg(2+). Asp11 serves as the catalytic Proton donor. Zn(2+) contacts are provided by Cys93, His95, Cys101, and Cys103. Residue Asp130 participates in Mg(2+) binding. An imidazoleglycerol-phosphate dehydratase region spans residues 165–352 (RSASYQRTTK…ENLASSKGVI (188 aa)).

The protein in the N-terminal section; belongs to the histidinol-phosphatase family. This sequence in the C-terminal section; belongs to the imidazoleglycerol-phosphate dehydratase family. Mg(2+) serves as cofactor. It depends on Zn(2+) as a cofactor.

It is found in the cytoplasm. It catalyses the reaction D-erythro-1-(imidazol-4-yl)glycerol 3-phosphate = 3-(imidazol-4-yl)-2-oxopropyl phosphate + H2O. It carries out the reaction L-histidinol phosphate + H2O = L-histidinol + phosphate. The protein operates within amino-acid biosynthesis; L-histidine biosynthesis; L-histidine from 5-phospho-alpha-D-ribose 1-diphosphate: step 6/9. It participates in amino-acid biosynthesis; L-histidine biosynthesis; L-histidine from 5-phospho-alpha-D-ribose 1-diphosphate: step 8/9. This is Histidine biosynthesis bifunctional protein HisB from Campylobacter jejuni subsp. jejuni serotype O:23/36 (strain 81-176).